We begin with the raw amino-acid sequence, 442 residues long: Tubulin beta chain (442 aa).

Residues glutamine 11, glutamate 69, serine 138, glycine 142, threonine 143, glycine 144, asparagine 204, and asparagine 226 each contribute to the GTP site. Glutamate 69 contacts Mg(2+).

Belongs to the tubulin family. As to quaternary structure, dimer of alpha and beta chains. A typical microtubule is a hollow water-filled tube with an outer diameter of 25 nm and an inner diameter of 15 nM. Alpha-beta heterodimers associate head-to-tail to form protofilaments running lengthwise along the microtubule wall with the beta-tubulin subunit facing the microtubule plus end conferring a structural polarity. Microtubules usually have 13 protofilaments but different protofilament numbers can be found in some organisms and specialized cells. Mg(2+) is required as a cofactor.

The protein localises to the cytoplasm. The protein resides in the cytoskeleton. Functionally, tubulin is the major constituent of microtubules, a cylinder consisting of laterally associated linear protofilaments composed of alpha- and beta-tubulin heterodimers. Microtubules grow by the addition of GTP-tubulin dimers to the microtubule end, where a stabilizing cap forms. Below the cap, tubulin dimers are in GDP-bound state, owing to GTPase activity of alpha-tubulin. This Pneumocystis carinii protein is Tubulin beta chain (TUB-B).